The chain runs to 169 residues: S-ribosylhomocysteine lyase (169 aa).

H54, H58, and C128 together coordinate Fe cation.

It belongs to the LuxS family. Homodimer. It depends on Fe cation as a cofactor.

It catalyses the reaction S-(5-deoxy-D-ribos-5-yl)-L-homocysteine = (S)-4,5-dihydroxypentane-2,3-dione + L-homocysteine. Involved in the synthesis of autoinducer 2 (AI-2) which is secreted by bacteria and is used to communicate both the cell density and the metabolic potential of the environment. The regulation of gene expression in response to changes in cell density is called quorum sensing. Catalyzes the transformation of S-ribosylhomocysteine (RHC) to homocysteine (HC) and 4,5-dihydroxy-2,3-pentadione (DPD). This chain is S-ribosylhomocysteine lyase, found in Shewanella sp. (strain ANA-3).